Consider the following 193-residue polypeptide: Protein PrsJ (193 aa).

Positions 1 to 27 (MVVNKTTAVLYLIALSLSGFIHTFLRA) are cleaved as a signal peptide.

It localises to the periplasm. Functionally, this protein maintains pilus integrity and thus is an important participant in pilus assembly. It may function as molecular chaperone directly or indirectly in the correct assembly of PapA subunits. The polypeptide is Protein PrsJ (prsJ) (Escherichia coli).